We begin with the raw amino-acid sequence, 358 residues long: 3-dehydroquinate synthase (358 aa).

Residues 105 to 109, 129 to 130, Lys-142, Lys-151, and 169 to 172 contribute to the NAD(+) site; these read GVVGD, TT, and TLKT. Zn(2+) contacts are provided by Glu-184, His-245, and His-262.

Belongs to the sugar phosphate cyclases superfamily. Dehydroquinate synthase family. The cofactor is NAD(+). Requires Co(2+) as cofactor. It depends on Zn(2+) as a cofactor.

The protein localises to the cytoplasm. The catalysed reaction is 7-phospho-2-dehydro-3-deoxy-D-arabino-heptonate = 3-dehydroquinate + phosphate. It participates in metabolic intermediate biosynthesis; chorismate biosynthesis; chorismate from D-erythrose 4-phosphate and phosphoenolpyruvate: step 2/7. Functionally, catalyzes the conversion of 3-deoxy-D-arabino-heptulosonate 7-phosphate (DAHP) to dehydroquinate (DHQ). The chain is 3-dehydroquinate synthase from Enterococcus faecalis (strain ATCC 47077 / OG1RF).